The chain runs to 104 residues: Iron-sulfur cluster assembly protein CyaY (104 aa).

This sequence belongs to the frataxin family.

In terms of biological role, involved in iron-sulfur (Fe-S) cluster assembly. May act as a regulator of Fe-S biogenesis. The protein is Iron-sulfur cluster assembly protein CyaY of Vibrio parahaemolyticus serotype O3:K6 (strain RIMD 2210633).